The following is a 258-amino-acid chain: Type III pantothenate kinase (258 aa).

6–13 is a binding site for ATP; that stretch reads DAGNTRIK. Residues Tyr98 and 105–108 contribute to the substrate site; that span reads GSDR. The active-site Proton acceptor is the Asp107. Thr131 contacts ATP. Position 184 (Thr184) interacts with substrate.

Belongs to the type III pantothenate kinase family. In terms of assembly, homodimer. The cofactor is NH4(+). Requires K(+) as cofactor.

Its subcellular location is the cytoplasm. It carries out the reaction (R)-pantothenate + ATP = (R)-4'-phosphopantothenate + ADP + H(+). The protein operates within cofactor biosynthesis; coenzyme A biosynthesis; CoA from (R)-pantothenate: step 1/5. Functionally, catalyzes the phosphorylation of pantothenate (Pan), the first step in CoA biosynthesis. The sequence is that of Type III pantothenate kinase from Herminiimonas arsenicoxydans.